The primary structure comprises 341 residues: Ketol-acid reductoisomerase (NADP(+)) (341 aa).

A KARI N-terminal Rossmann domain is found at 2-181 (AKVYYNGDAN…GATRAGVLET (180 aa)). NADP(+)-binding positions include 25–28 (YGSQ), arginine 48, serine 52, and 82–85 (DEKQ). Residue histidine 107 is part of the active site. An NADP(+)-binding site is contributed by glycine 133. Residues 182 to 327 (TFKEETETDL…RELRSMMPFV (146 aa)) form the KARI C-terminal knotted domain. The Mg(2+) site is built by aspartate 190, glutamate 194, glutamate 226, and glutamate 230. Position 251 (serine 251) interacts with substrate.

The protein belongs to the ketol-acid reductoisomerase family. The cofactor is Mg(2+).

It catalyses the reaction (2R)-2,3-dihydroxy-3-methylbutanoate + NADP(+) = (2S)-2-acetolactate + NADPH + H(+). The enzyme catalyses (2R,3R)-2,3-dihydroxy-3-methylpentanoate + NADP(+) = (S)-2-ethyl-2-hydroxy-3-oxobutanoate + NADPH + H(+). The protein operates within amino-acid biosynthesis; L-isoleucine biosynthesis; L-isoleucine from 2-oxobutanoate: step 2/4. It participates in amino-acid biosynthesis; L-valine biosynthesis; L-valine from pyruvate: step 2/4. Involved in the biosynthesis of branched-chain amino acids (BCAA). Catalyzes an alkyl-migration followed by a ketol-acid reduction of (S)-2-acetolactate (S2AL) to yield (R)-2,3-dihydroxy-isovalerate. In the isomerase reaction, S2AL is rearranged via a Mg-dependent methyl migration to produce 3-hydroxy-3-methyl-2-ketobutyrate (HMKB). In the reductase reaction, this 2-ketoacid undergoes a metal-dependent reduction by NADPH to yield (R)-2,3-dihydroxy-isovalerate. The sequence is that of Ketol-acid reductoisomerase (NADP(+)) from Geobacillus sp. (strain WCH70).